Reading from the N-terminus, the 42-residue chain is Serine protease inhibitor 8 (42 aa).

This sequence belongs to the protease inhibitor I3 (leguminous Kunitz-type inhibitor) family. Cortex of potato tuber.

In terms of biological role, potent inhibitor of animal pancreatic trypsin (serine protease). The sequence is that of Serine protease inhibitor 8 from Solanum tuberosum (Potato).